The chain runs to 911 residues: Protein transport protein SEC24-1 (911 aa).

Residues 108–123 (QPLPQQQQQQQQQQGP) show a composition bias toward low complexity. Positions 108–130 (QPLPQQQQQQQQQQGPAKPPKPM) are disordered. Residues cysteine 226, cysteine 229, cysteine 248, and cysteine 251 each coordinate Zn(2+). Residues 226–251 (CRRCRSYMNPFVHFNQDGRRWKCNIC) form a zinc finger-like region.

The protein belongs to the SEC23/SEC24 family. SEC24 subfamily. As to quaternary structure, the COPII coat is composed of at least 5 proteins: the SEC23/24 complex, the SEC13/31 complex, and the protein SAR1. Golgi apparatus membrane; Peripheral membrane protein; Cytoplasmic side.

Its subcellular location is the cytoplasm. The protein resides in the cytoplasmic vesicle. It is found in the COPII-coated vesicle membrane. The protein localises to the endoplasmic reticulum membrane. It localises to the golgi apparatus membrane. Component of the coat protein complex II (COPII) which promotes the formation of transport vesicles from the endoplasmic reticulum (ER). The coat has two main functions, the physical deformation of the endoplasmic reticulum membrane into vesicles and the selection of cargo molecules. The sequence is that of Protein transport protein SEC24-1 (SEC241) from Naumovozyma castellii (Yeast).